Consider the following 550-residue polypeptide: CTP synthase (550 aa).

The amidoligase domain stretch occupies residues 1–277; sequence MNGSADAGPR…GRAVERALGL (277 aa). Ser-23 lines the CTP pocket. Ser-23 lines the UTP pocket. Position 24–29 (24–29) interacts with ATP; the sequence is SLGKGI. Residue Tyr-64 participates in L-glutamine binding. ATP is bound at residue Asp-81. 2 residues coordinate Mg(2+): Asp-81 and Glu-151. CTP contacts are provided by residues 158 to 160, 198 to 203, and Lys-234; these read DIE and KTKPTQ. Residues 198–203 and Lys-234 contribute to the UTP site; that span reads KTKPTQ. Val-252 contributes to the ATP binding site. The 248-residue stretch at 302 to 549 folds into the Glutamine amidotransferase type-1 domain; that stretch reads KIAIAGKYVK…VEAALAYQER (248 aa). Gly-364 provides a ligand contact to L-glutamine. Catalysis depends on Cys-391, which acts as the Nucleophile; for glutamine hydrolysis. Residues 392–395, Glu-415, and Arg-472 each bind L-glutamine; that span reads LGLQ. Residues His-522 and Glu-524 contribute to the active site.

It belongs to the CTP synthase family. Homotetramer in the presence of UTP and ATP. Is in a protein concentration-dependent equilibrium between monomer, dimer, and tetramer in the absence of UTP and ATP.

The catalysed reaction is UTP + L-glutamine + ATP + H2O = CTP + L-glutamate + ADP + phosphate + 2 H(+). It catalyses the reaction L-glutamine + H2O = L-glutamate + NH4(+). It carries out the reaction UTP + NH4(+) + ATP = CTP + ADP + phosphate + 2 H(+). It functions in the pathway pyrimidine metabolism; CTP biosynthesis via de novo pathway; CTP from UDP: step 2/2. Its activity is regulated as follows. Allosterically activated by GTP, when glutamine is the substrate. GTP has no effect on the reaction when ammonia is the substrate. The allosteric effector GTP functions by stabilizing the protein conformation that binds the tetrahedral intermediate(s) formed during glutamine hydrolysis. Inhibited by the product CTP, via allosteric rather than competitive inhibition. Functionally, catalyzes the ATP-dependent amination of UTP to CTP with either L-glutamine or ammonia as the source of nitrogen. Regulates intracellular CTP levels through interactions with the four ribonucleotide triphosphates. The protein is CTP synthase of Thermus thermophilus (strain ATCC 27634 / DSM 579 / HB8).